The primary structure comprises 798 residues: MALHSPQYIFGDFSPDEFNQFFVTPRSSVELPPYSGTVLCGTQAVDKLPDGQEYQRIEFGVDEVIEPSDTLPRTPSYSISSTLNPQAPEFILGCTASKITPDGITKEASYGSIDCQYPGSALALDGSSNVEAEVLENDGVSGGLGQRERKKKKKRPPGYYSYLKDGGDDSISTEALVNGHANSAVPNSVSAEDAEFMGDMPPSVTPRTCNSPQNSTDSVSDIVPDSPFPGALGSDTRTAGQPEGGPGADFGQSCFPAEAGRDTLSRTAGAQPCVGTDTTENLGVANGQILESSGEGTATNGVELHTTESIDLDPTKPESASPPADGTGSASGTLPVSQPKSWASLFHDSKPSSSSPVAYVETKYSPPAISPLVSEKQVEVKEGLVPVSEDPVAIKIAELLENVTLIHKPVSLQPRGLINKGNWCYINATLQALVACPPMYHLMKFIPLYSKVQRPCTSTPMIDSFVRLMNEFTNMPVPPKPRQALGDKIVRDIRPGAAFEPTYIYRLLTVNKSSLSEKGRQEDAEEYLGFILNGLHEEMLNLKKLLSPSNEKLTISNGPKNHSVNEEEQEEQGEGSEDEWEQVGPRNKTSVTRQADFVQTPITGIFGGHIRSVVYQQSSKESATLQPFFTLQLDIQSDKIRTVQDALESLVARESVQGYTTKTKQEVEISRRVTLEKLPPVLVLHLKRFVYEKTGGCQKLIKNIEYPVDLEISKELLSPGVKNKNFKCHRTYRLFAVVYHHGNSATGGHYTTDVFQIGLNGWLRIDDQTVKVINQYQVVKPTAERTAYLLYYRRVDLL.

An N-acetylalanine modification is found at A2. Residues 2–100 form an interaction with p53/TP53 region; that stretch reads ALHSPQYIFG…ILGCTASKIT (99 aa). A G3BP1-binding region spans residues 6 to 21; sequence PQYIFGDFSPDEFNQF. Phosphothreonine is present on T24. T42 carries the post-translational modification Phosphothreonine; by ATM. At T100 the chain carries Phosphothreonine. Disordered regions lie at residues 139–166, 194–257, and 307–337; these read GVSG…LKDG, AEFM…CFPA, and TESI…LPVS. Over residues 205–219 the composition is skewed to polar residues; it reads TPRTCNSPQNSTDSV. Residues S211 and S226 each carry the phosphoserine modification. Positions 307–316 are enriched in basic and acidic residues; sequence TESIDLDPTK. A Phosphoserine modification is found at S321. Positions 328 to 337 are enriched in polar residues; the sequence is GSASGTLPVS. S337 carries the phosphoserine; by ATM modification. Phosphoserine occurs at positions 365 and 370. A USP domain is found at 415–795; that stretch reads RGLINKGNWC…TAYLLYYRRV (381 aa). The Nucleophile role is filled by C424. S547 bears the Phosphoserine mark. Residues 551–562 show a composition bias toward polar residues; sequence EKLTISNGPKNH. Residues 551–594 form a disordered region; it reads EKLTISNGPKNHSVNEEEQEEQGEGSEDEWEQVGPRNKTSVTRQ. Phosphoserine occurs at positions 563 and 576. Positions 566 to 581 are enriched in acidic residues; that stretch reads EEEQEEQGEGSEDEWE. The active-site Proton acceptor is H749.

This sequence belongs to the peptidase C19 family. USP10 subfamily. As to quaternary structure, found in a deubiquitination complex with TANK, USP10 and ZC3H12A; this complex inhibits genotoxic stress- or interleukin-1-beta (IL1B)-mediated NF-kappa-B activation by promoting IKBKG or TRAF6 deubiquitination. Interacts with IKBKG; this interaction increases in response to DNA damage. Interacts with TANK; this interaction increases in response to DNA damage. Interacts with TRAF6; this interaction increases in response to DNA damage. Interacts with ZC3H12A; this interaction increases in response to DNA damage. Interacts with G3BP1 (via NTF2 domain) and G3BP2 (via NTF2 domain); inhibiting stress granule formation. In terms of processing, phosphorylated by ATM following DNA damage, leading to stabilization and translocation it to the nucleus. Post-translationally, ubiquitinated. Deubiquitinated by USP13. As to expression, widely expressed.

Its subcellular location is the cytoplasm. It is found in the nucleus. The protein resides in the early endosome. It carries out the reaction Thiol-dependent hydrolysis of ester, thioester, amide, peptide and isopeptide bonds formed by the C-terminal Gly of ubiquitin (a 76-residue protein attached to proteins as an intracellular targeting signal).. With respect to regulation, specifically inhibited by spautin-1 (specific and potent autophagy inhibitor-1), a derivative of MBCQ that binds to USP10 and inhibits deubiquitinase activity. Regulated by PIK3C3/VPS34-containing complexes. In terms of biological role, hydrolase that can remove conjugated ubiquitin from target proteins such as p53/TP53, RPS2/us5, RPS3/us3, RPS10/eS10, BECN1, SNX3 and CFTR. Acts as an essential regulator of p53/TP53 stability: in unstressed cells, specifically deubiquitinates p53/TP53 in the cytoplasm, leading to counteract MDM2 action and stabilize p53/TP53. Following DNA damage, translocates to the nucleus and deubiquitinates p53/TP53, leading to regulate the p53/TP53-dependent DNA damage response. Component of a regulatory loop that controls autophagy and p53/TP53 levels: mediates deubiquitination of BECN1, a key regulator of autophagy, leading to stabilize the PIK3C3/VPS34-containing complexes. In turn, PIK3C3/VPS34-containing complexes regulate USP10 stability, suggesting the existence of a regulatory system by which PIK3C3/VPS34-containing complexes regulate p53/TP53 protein levels via USP10 and USP13. Does not deubiquitinate MDM2. Plays a key role in 40S ribosome subunit recycling when a ribosome has stalled during translation: acts both by inhibiting formation of stress granules, which store stalled translation pre-initiation complexes, and mediating deubiquitination of 40S ribosome subunits. Acts as a negative regulator of stress granules formation by lowering G3BP1 and G3BP2 valence, thereby preventing G3BP1 and G3BP2 ability to undergo liquid-liquid phase separation (LLPS) and assembly of stress granules. Promotes 40S ribosome subunit recycling following ribosome dissociation in response to ribosome stalling by mediating deubiquitination of 40S ribosomal proteins RPS2/us5, RPS3/us3 and RPS10/eS10, thereby preventing their degradation by the proteasome. Part of a ribosome quality control that takes place when ribosomes have stalled during translation initiation (iRQC): USP10 acts by removing monoubiquitination of RPS2/us5 and RPS3/us3, promoting 40S ribosomal subunit recycling. Deubiquitinates CFTR in early endosomes, enhancing its endocytic recycling. Involved in a TANK-dependent negative feedback response to attenuate NF-kappa-B activation via deubiquitinating IKBKG or TRAF6 in response to interleukin-1-beta (IL1B) stimulation or upon DNA damage. Deubiquitinates TBX21 leading to its stabilization. Plays a negative role in the RLR signaling pathway upon RNA virus infection by blocking the RIGI-mediated MAVS activation. Mechanistically, removes the unanchored 'Lys-63'-linked polyubiquitin chains of MAVS to inhibit its aggregation, essential for its activation. The protein is Ubiquitin carboxyl-terminal hydrolase 10 of Homo sapiens (Human).